Reading from the N-terminus, the 213-residue chain is Golgi apparatus membrane protein TVP23 homolog A (213 aa).

4 helical membrane-spanning segments follow: residues 32–52, 54–74, 123–143, and 150–170; these read PLATFFHLFFRVSAIVTYVSC, WFSKSFVGCFVMVLLLLSLDF, IFWLGLIICPMIWIVFFFSTL, and WLALVVAGISLQAANLYGYIL.

This sequence belongs to the TVP23 family.

The protein resides in the membrane. This chain is Golgi apparatus membrane protein TVP23 homolog A (TVP23A), found in Homo sapiens (Human).